A 127-amino-acid chain; its full sequence is Large ribosomal subunit protein eL32 (127 aa).

Basic and acidic residues predominate over residues 37-48 (KWRKPKGTDSKM). The interval 37-65 (KWRKPKGTDSKMRVKLKGKARSPSIGWSS) is disordered.

Belongs to the eukaryotic ribosomal protein eL32 family.

The polypeptide is Large ribosomal subunit protein eL32 (Thermococcus sibiricus (strain DSM 12597 / MM 739)).